We begin with the raw amino-acid sequence, 64 residues long: Temporin-ALg (64 aa).

A signal peptide spans 1–22 (MFTLKKSLLLLFFLGTINLSLC). Positions 23-46 (EQERNAEEERRDDLGERQAEVEKR) are excised as a propeptide. L62 carries the leucine amide modification.

The protein belongs to the frog skin active peptide (FSAP) family. Temporin subfamily. In terms of tissue distribution, expressed by the skin glands.

The protein resides in the secreted. In terms of biological role, antimicrobial peptide with activity against Gram-positive and Gram-negative bacteria and against fungi. Has been tested against S.aureus (MIC=2.5 ug/mL), B.pumilus (MIC=2.5 ug/mL), B.cereus (MIC=30.0 ug/mL), E.coli (MIC=5.0 ug/mL), B.dysenteriae (MIC=10.0 ug/mL), A.cacoaceticus (MIC=30.0 ug/mL), P.aeruginosa (MIC=7.5 ug/mL) and C.albicans (MIC=1.25 ug/mL). Also shows a weak hemolytic activity. The sequence is that of Temporin-ALg from Amolops loloensis (Lolokou Sucker Frog).